Consider the following 960-residue polypeptide: Glycine dehydrogenase (decarboxylating) (960 aa).

Lysine 709 is modified (N6-(pyridoxal phosphate)lysine).

It belongs to the GcvP family. The glycine cleavage system is composed of four proteins: P, T, L and H. It depends on pyridoxal 5'-phosphate as a cofactor.

The catalysed reaction is N(6)-[(R)-lipoyl]-L-lysyl-[glycine-cleavage complex H protein] + glycine + H(+) = N(6)-[(R)-S(8)-aminomethyldihydrolipoyl]-L-lysyl-[glycine-cleavage complex H protein] + CO2. Functionally, the glycine cleavage system catalyzes the degradation of glycine. The P protein binds the alpha-amino group of glycine through its pyridoxal phosphate cofactor; CO(2) is released and the remaining methylamine moiety is then transferred to the lipoamide cofactor of the H protein. This is Glycine dehydrogenase (decarboxylating) from Hahella chejuensis (strain KCTC 2396).